The chain runs to 306 residues: Pantothenate kinase (306 aa).

90 to 97 (GSVAVGKS) serves as a coordination point for ATP.

Belongs to the prokaryotic pantothenate kinase family.

Its subcellular location is the cytoplasm. It carries out the reaction (R)-pantothenate + ATP = (R)-4'-phosphopantothenate + ADP + H(+). The protein operates within cofactor biosynthesis; coenzyme A biosynthesis; CoA from (R)-pantothenate: step 1/5. This chain is Pantothenate kinase, found in Listeria monocytogenes serotype 4a (strain HCC23).